We begin with the raw amino-acid sequence, 196 residues long: Cytochrome c biogenesis ATP-binding export protein CcmA (196 aa).

An ABC transporter domain is found at 2–195; the sequence is LSFHQLKFNI…HIKSAQILQL (194 aa). Position 34–41 (34–41) interacts with ATP; it reads GANGCGKT.

It belongs to the ABC transporter superfamily. CcmA exporter (TC 3.A.1.107) family. The complex is composed of two ATP-binding proteins (CcmA) and two transmembrane proteins (CcmB).

The protein localises to the cell inner membrane. The catalysed reaction is heme b(in) + ATP + H2O = heme b(out) + ADP + phosphate + H(+). In terms of biological role, part of the ABC transporter complex CcmAB involved in the biogenesis of c-type cytochromes; once thought to export heme, this seems not to be the case, but its exact role is uncertain. Responsible for energy coupling to the transport system. The polypeptide is Cytochrome c biogenesis ATP-binding export protein CcmA (Rickettsia bellii (strain RML369-C)).